Consider the following 117-residue polypeptide: MNPIRRRKIEAEAVRTVAMMILSGKVKDPRVHMVSVHRAEISEDGKNMKVFVTAICTDKKKLKVLSGLNSAAGLFQTTLSGKLGLRITPRMQFLWDEEYIQSLDESLRLTRKPTSAD.

It belongs to the RbfA family. As to quaternary structure, monomer. Binds 30S ribosomal subunits, but not 50S ribosomal subunits or 70S ribosomes.

The protein resides in the cytoplasm. In terms of biological role, one of several proteins that assist in the late maturation steps of the functional core of the 30S ribosomal subunit. Associates with free 30S ribosomal subunits (but not with 30S subunits that are part of 70S ribosomes or polysomes). Required for efficient processing of 16S rRNA. May interact with the 5'-terminal helix region of 16S rRNA. This chain is Ribosome-binding factor A, found in Leptospira borgpetersenii serovar Hardjo-bovis (strain JB197).